The sequence spans 553 residues: Flagellar hook-associated protein 1 (553 aa).

Belongs to the flagella basal body rod proteins family.

It localises to the secreted. The protein resides in the bacterial flagellum. The chain is Flagellar hook-associated protein 1 (flgK) from Salmonella typhi.